The sequence spans 149 residues: Arginine repressor (149 aa).

It belongs to the ArgR family.

Its subcellular location is the cytoplasm. It participates in amino-acid biosynthesis; L-arginine biosynthesis [regulation]. Its function is as follows. Regulates arginine biosynthesis genes. This is Arginine repressor from Bacillus velezensis (strain DSM 23117 / BGSC 10A6 / LMG 26770 / FZB42) (Bacillus amyloliquefaciens subsp. plantarum).